The chain runs to 131 residues: Lymphocyte antigen 6C2 (131 aa).

An N-terminal signal peptide occupies residues 1–26; that stretch reads MDSTHATKSCLLILLVALLCAGRAQG. One can recognise a UPAR/Ly6 domain in the interval 27-116; it reads LQCYECYGVP…TAGSTWTMAG (90 aa). 5 disulfide bridges follow: cysteine 29–cysteine 53, cysteine 32–cysteine 41, cysteine 46–cysteine 74, cysteine 78–cysteine 95, and cysteine 96–cysteine 101. A lipid anchor (GPI-anchor amidated glycine) is attached at glycine 109. Positions 110 to 131 are cleaved as a propeptide — removed in mature form; sequence STWTMAGVLLFSLSSVILQTLL.

It is found in the cell membrane. This is Lymphocyte antigen 6C2 (Ly6c2) from Mus musculus (Mouse).